A 160-amino-acid polypeptide reads, in one-letter code: Small ribosomal subunit protein uS19 (160 aa).

A disordered region spans residues 1–27 (MARQKFSGKGGKGKSKKGQQSTAPRRR).

It belongs to the universal ribosomal protein uS19 family.

Protein S19 forms a complex with S13 that binds strongly to the 16S ribosomal RNA. The sequence is that of Small ribosomal subunit protein uS19 from Methanococcus vannielii (strain ATCC 35089 / DSM 1224 / JCM 13029 / OCM 148 / SB).